Reading from the N-terminus, the 594-residue chain is Metastasis-associated protein MTA3 (594 aa).

Positions 1–147 (MAANMYRVGD…PSLKTLLADK (147 aa)) constitute a BAH domain. An ELM2 domain is found at 148-259 (GEIRVGPRYQ…SAISVLVPLG (112 aa)). The SANT domain occupies 266-318 (DEMEEWSASEASLFEEALEKYGKDFNDIRQDFLPWKSLTSIIEYYYMWKTTDR). A GATA-type; atypical zinc finger spans residues 379 to 406 (CESCYATQSHQWYSWGPPNMQCRLCAIC). Phosphoserine is present on residues Ser428 and Ser430. Thr455 is subject to Phosphothreonine. Ser519 carries the phosphoserine modification.

Belongs to the metastasis-associated protein family. As to quaternary structure, component of the nucleosome remodeling and deacetylase (NuRD) repressor complex, composed of core proteins MTA1, MTA2, MTA3, RBBP4, RBBP7, HDAC1, HDAC2, MBD2, MBD3, and peripherally associated proteins CDK2AP1, CDK2AP2, GATAD2A, GATAD2B, CHD3, CHD4 and CHD5. The exact stoichiometry of the NuRD complex is unknown, and some subunits such as MBD2 and MBD3, GATAD2A and GATAD2B, and CHD3, CHD4 and CHD5 define mutually exclusive NuRD complexes. Interacts with BCL6. Interacts with NACC2. Interacts with PWWP2B. In terms of tissue distribution, expressed in germinal centers of lymphoid tissues. No expression in nonepithelial cells.

The protein resides in the nucleus. It is found in the cytoplasm. In terms of biological role, acts as a component of the histone deacetylase NuRD complex which participates in the remodeling of chromatin. Plays a role in maintenance of the normal epithelial architecture through the repression of SNAI1 transcription in a histone deacetylase-dependent manner, and thus the regulation of E-cadherin levels. Contributes to transcriptional repression by BCL6. This Homo sapiens (Human) protein is Metastasis-associated protein MTA3 (MTA3).